The following is a 367-amino-acid chain: Putrescine/agmatine-binding protein (367 aa).

An N-terminal signal peptide occupies residues 1 to 19; sequence MKKVCALALSILTTIGATA.

The protein belongs to the bacterial solute-binding protein 1 family.

The protein localises to the periplasm. Its function is as follows. Binds putrescine and agmatine. In Pseudomonas aeruginosa (strain ATCC 15692 / DSM 22644 / CIP 104116 / JCM 14847 / LMG 12228 / 1C / PRS 101 / PAO1), this protein is Putrescine/agmatine-binding protein.